Here is a 371-residue protein sequence, read N- to C-terminus: Succinyl-diaminopimelate desuccinylase (371 aa).

His-68 is a binding site for Zn(2+). Asp-70 is an active-site residue. Asp-99 is a binding site for Zn(2+). The active-site Proton acceptor is the Glu-130. 3 residues coordinate Zn(2+): Glu-131, Glu-159, and His-344.

The protein belongs to the peptidase M20A family. DapE subfamily. In terms of assembly, homodimer. It depends on Zn(2+) as a cofactor. The cofactor is Co(2+).

The catalysed reaction is N-succinyl-(2S,6S)-2,6-diaminopimelate + H2O = (2S,6S)-2,6-diaminopimelate + succinate. It functions in the pathway amino-acid biosynthesis; L-lysine biosynthesis via DAP pathway; LL-2,6-diaminopimelate from (S)-tetrahydrodipicolinate (succinylase route): step 3/3. In terms of biological role, catalyzes the hydrolysis of N-succinyl-L,L-diaminopimelic acid (SDAP), forming succinate and LL-2,6-diaminopimelate (DAP), an intermediate involved in the bacterial biosynthesis of lysine and meso-diaminopimelic acid, an essential component of bacterial cell walls. The polypeptide is Succinyl-diaminopimelate desuccinylase (Acidiphilium cryptum (strain JF-5)).